We begin with the raw amino-acid sequence, 447 residues long: Phosphoglucosamine mutase (447 aa).

Catalysis depends on S103, which acts as the Phosphoserine intermediate. 4 residues coordinate Mg(2+): S103, D242, D244, and D246. At S103 the chain carries Phosphoserine.

It belongs to the phosphohexose mutase family. Requires Mg(2+) as cofactor. Post-translationally, activated by phosphorylation.

It catalyses the reaction alpha-D-glucosamine 1-phosphate = D-glucosamine 6-phosphate. In terms of biological role, catalyzes the conversion of glucosamine-6-phosphate to glucosamine-1-phosphate. This Jannaschia sp. (strain CCS1) protein is Phosphoglucosamine mutase.